The chain runs to 1320 residues: Immunoglobulin superfamily member 1 (1320 aa).

Positions 1–18 (MMLRTFTLLLLCIWLNRG) are cleaved as a signal peptide. At 19–504 (MTSMAAVESQ…LPWNSILNEA (486 aa)) the chain is on the extracellular side. Ig-like C2-type domains follow at residues 29 to 113 (PELW…KILE), 115 to 212 (EAPG…KLVV), 224 to 308 (HPGP…IWVT), 312 to 399 (PKTW…ATYN), and 401 to 482 (VELI…HRSE). An N-linked (GlcNAc...) asparagine glycan is attached at Asn-44. Cys-49 and Cys-97 are disulfide-bonded. N-linked (GlcNAc...) asparagine glycans are attached at residues Asn-329, Asn-365, and Asn-372. Cystine bridges form between Cys-334–Cys-383 and Cys-423–Cys-466. The helical transmembrane segment at 505–525 (IRVSLTVQFLSLLLLVLWLQW) threads the bilayer. Topologically, residues 526–534 (KCRRLRLRE) are cytoplasmic. Residues 535–555 (AWLLGTAQGVAMLVILIALLC) traverse the membrane as a helical segment. The Extracellular segment spans residues 556–1320 (CGLCNGALTE…GVSVEQTVPI (765 aa)). Ig-like C2-type domains are found at residues 572 to 665 (PTPK…VGTD), 662 to 756 (VGTD…ELVI), 761 to 853 (PKPF…LIVT), 857 to 942 (PKPT…YLST), 949 to 1044 (TDTF…ELIV), 1049 to 1134 (PKPS…NHSN), and 1145 to 1226 (PKPS…EPSD). N-linked (GlcNAc...) asparagine glycans are attached at residues Asn-591, Asn-731, Asn-782, Asn-830, Asn-874, Asn-923, Asn-970, Asn-1011, and Asn-1066. A disulfide bond links Cys-783 and Cys-833. A disulfide bridge links Cys-879 with Cys-926. A disulfide bridge connects residues Cys-1071 and Cys-1118. Residues Asn-1131 and Asn-1207 are each glycosylated (N-linked (GlcNAc...) asparagine). Cys-1167 and Cys-1210 form a disulfide bridge.

In terms of assembly, interacts with INHA; the interaction is not confirmed by standard receptor binding assays. Interacts with ACVR1B; the interaction appears to be ligand-dependent as it is diminished by inhibin B and activin A. Interacts with ACVR2A, ACVR2B, ACVRL1 and BMPR1B. Interacts with HECTD1. In terms of tissue distribution, expressed in pituitary gland, testis and liver. Isoform 2 is expressed pituitary gland and testis.

It is found in the membrane. Its subcellular location is the secreted. Functionally, seems to be a coreceptor in inhibin signaling, but seems not to be a high-affinity inhibin receptor. Antagonizes activin A signaling in the presence or absence of inhibin B. Necessary to mediate a specific antagonistic effect of inhibin B on activin-stimulated transcription. This chain is Immunoglobulin superfamily member 1 (Igsf1), found in Rattus norvegicus (Rat).